The chain runs to 231 residues: Phosphoribosylformylglycinamidine synthase subunit PurQ (231 aa).

The Glutamine amidotransferase type-1 domain occupies 7 to 231; sequence GVVVFPGSNC…RLFASLFRQL (225 aa). Cys89 acts as the Nucleophile in catalysis. Residues His206 and Glu208 contribute to the active site.

In terms of assembly, part of the FGAM synthase complex composed of 1 PurL, 1 PurQ and 2 PurS subunits.

It is found in the cytoplasm. The enzyme catalyses N(2)-formyl-N(1)-(5-phospho-beta-D-ribosyl)glycinamide + L-glutamine + ATP + H2O = 2-formamido-N(1)-(5-O-phospho-beta-D-ribosyl)acetamidine + L-glutamate + ADP + phosphate + H(+). The catalysed reaction is L-glutamine + H2O = L-glutamate + NH4(+). It participates in purine metabolism; IMP biosynthesis via de novo pathway; 5-amino-1-(5-phospho-D-ribosyl)imidazole from N(2)-formyl-N(1)-(5-phospho-D-ribosyl)glycinamide: step 1/2. Its function is as follows. Part of the phosphoribosylformylglycinamidine synthase complex involved in the purines biosynthetic pathway. Catalyzes the ATP-dependent conversion of formylglycinamide ribonucleotide (FGAR) and glutamine to yield formylglycinamidine ribonucleotide (FGAM) and glutamate. The FGAM synthase complex is composed of three subunits. PurQ produces an ammonia molecule by converting glutamine to glutamate. PurL transfers the ammonia molecule to FGAR to form FGAM in an ATP-dependent manner. PurS interacts with PurQ and PurL and is thought to assist in the transfer of the ammonia molecule from PurQ to PurL. The chain is Phosphoribosylformylglycinamidine synthase subunit PurQ from Chlorobium luteolum (strain DSM 273 / BCRC 81028 / 2530) (Pelodictyon luteolum).